The primary structure comprises 197 residues: Holliday junction branch migration complex subunit RuvA (197 aa).

The interval 1 to 61 is domain I; sequence MYEYFEGTIT…ENGMTLYGFK (61 aa). Residues 62–140 form a domain II region; sequence SQQDKVLFNK…NYVAENLFTE (79 aa). The interval 141–150 is flexible linker; that stretch reads DEPVESVFPA. The interval 150-197 is domain III; the sequence is ALEDALLALGALGYSQKEVDRIKPKLKKLPEMSADEYIKQGLGFLLKK.

Belongs to the RuvA family. In terms of assembly, homotetramer. Forms an RuvA(8)-RuvB(12)-Holliday junction (HJ) complex. HJ DNA is sandwiched between 2 RuvA tetramers; dsDNA enters through RuvA and exits via RuvB. An RuvB hexamer assembles on each DNA strand where it exits the tetramer. Each RuvB hexamer is contacted by two RuvA subunits (via domain III) on 2 adjacent RuvB subunits; this complex drives branch migration. In the full resolvosome a probable DNA-RuvA(4)-RuvB(12)-RuvC(2) complex forms which resolves the HJ.

The protein resides in the cytoplasm. In terms of biological role, the RuvA-RuvB-RuvC complex processes Holliday junction (HJ) DNA during genetic recombination and DNA repair, while the RuvA-RuvB complex plays an important role in the rescue of blocked DNA replication forks via replication fork reversal (RFR). RuvA specifically binds to HJ cruciform DNA, conferring on it an open structure. The RuvB hexamer acts as an ATP-dependent pump, pulling dsDNA into and through the RuvAB complex. HJ branch migration allows RuvC to scan DNA until it finds its consensus sequence, where it cleaves and resolves the cruciform DNA. This chain is Holliday junction branch migration complex subunit RuvA, found in Lactobacillus delbrueckii subsp. bulgaricus (strain ATCC BAA-365 / Lb-18).